We begin with the raw amino-acid sequence, 377 residues long: Succinyl-diaminopimelate desuccinylase (377 aa).

Residue histidine 68 participates in Zn(2+) binding. Residue aspartate 70 is part of the active site. Residue aspartate 101 coordinates Zn(2+). The active-site Proton acceptor is glutamate 135. Residues glutamate 136, glutamate 164, and histidine 350 each contribute to the Zn(2+) site.

This sequence belongs to the peptidase M20A family. DapE subfamily. As to quaternary structure, homodimer. Zn(2+) serves as cofactor. Requires Co(2+) as cofactor.

The catalysed reaction is N-succinyl-(2S,6S)-2,6-diaminopimelate + H2O = (2S,6S)-2,6-diaminopimelate + succinate. Its pathway is amino-acid biosynthesis; L-lysine biosynthesis via DAP pathway; LL-2,6-diaminopimelate from (S)-tetrahydrodipicolinate (succinylase route): step 3/3. Functionally, catalyzes the hydrolysis of N-succinyl-L,L-diaminopimelic acid (SDAP), forming succinate and LL-2,6-diaminopimelate (DAP), an intermediate involved in the bacterial biosynthesis of lysine and meso-diaminopimelic acid, an essential component of bacterial cell walls. In Acinetobacter baumannii (strain SDF), this protein is Succinyl-diaminopimelate desuccinylase.